Reading from the N-terminus, the 310-residue chain is Ribosomal RNA small subunit methyltransferase H (310 aa).

Residues 32–34 (GGH), aspartate 52, phenylalanine 79, aspartate 100, and glutamine 107 each bind S-adenosyl-L-methionine.

The protein belongs to the methyltransferase superfamily. RsmH family.

It localises to the cytoplasm. It carries out the reaction cytidine(1402) in 16S rRNA + S-adenosyl-L-methionine = N(4)-methylcytidine(1402) in 16S rRNA + S-adenosyl-L-homocysteine + H(+). In terms of biological role, specifically methylates the N4 position of cytidine in position 1402 (C1402) of 16S rRNA. This is Ribosomal RNA small subunit methyltransferase H from Bacillus mycoides (strain KBAB4) (Bacillus weihenstephanensis).